The chain runs to 592 residues: Syntaxin-binding protein 3 (592 aa).

Residues 1–255 (MAPPVAERGL…STVLHELTFQ (255 aa)) form a mediates interaction with DOC2B region.

The protein belongs to the STXBP/unc-18/SEC1 family. Interacts with DOC2B; the interaction is direct, occurs at the cell membrane, excludes interaction with STX4 and regulates glucose-stimulated insulin secretion. Interacts with STX4. Post-translationally, phosphorylated by PKC in platelets in response to thrombin stimulation; phosphorylation inhibits binding to STX4. Megakaryocytes and platelets.

It localises to the cytoplasm. It is found in the cytosol. The protein localises to the cell membrane. Functionally, together with STX4 and VAMP2, may play a role in insulin-dependent movement of GLUT4 and in docking/fusion of intracellular GLUT4-containing vesicles with the cell surface in adipocytes. The chain is Syntaxin-binding protein 3 (STXBP3) from Homo sapiens (Human).